A 71-amino-acid chain; its full sequence is MPIIKIRDNEPFDVALRRFKRSCEKAGILSEIRRREFYEKPTTERKRAKASAIKRLSKKLARENLKRIRMY.

It belongs to the bacterial ribosomal protein bS21 family.

The sequence is that of Small ribosomal subunit protein bS21 from Buchnera aphidicola subsp. Cinara cedri (strain Cc).